The chain runs to 360 residues: E3 ubiquitin-protein ligase RNF146 (360 aa).

Residues 37 to 75 (CAICLQTCVHPVSLPCKHVFCYLCVKGASWLGKRCALCR) form an RING-type zinc finger. Glycyl lysine isopeptide (Lys-Gly) (interchain with G-Cter in ubiquitin) cross-links involve residues Lys-85 and Lys-95. The region spanning 92-168 (EELKAASRGN…EHGRRRKIKR (77 aa)) is the WWE domain. Residues Tyr-108, Arg-111, and Trp-115 each contribute to the a glycoprotein site. Lys-131 participates in a covalent cross-link: Glycyl lysine isopeptide (Lys-Gly) (interchain with G-Cter in ubiquitin). Residues Tyr-145, Gln-154, Arg-164, and Lys-176 each contribute to the a glycoprotein site. Lys-176 participates in a covalent cross-link: Glycyl lysine isopeptide (Lys-Gly) (interchain with G-Cter in ubiquitin). A disordered region spans residues 259-360 (ERSHRGEGEE…PDGQCTVTEV (102 aa)). Over residues 284–294 (SIEETESDASS) the composition is skewed to acidic residues. Residues Ser-290 and Ser-294 each carry the phosphoserine modification. The span at 295-305 (DSENVSSAVVA) shows a compositional bias: low complexity. The span at 307–333 (HSLTQQRLLVSNANQTVSDRSDQSGTD) shows a compositional bias: polar residues.

As to quaternary structure, can form homooligomers. Interacts with PARsylated AXIN1, AXIN2, BLZF1, CASC3, H1-2, IPO7, LIG3, NCL, PARP1, XRCC1, XRCC5 and XRCC6. Interacts with DDB1, DHX15, IQGAP1, LRPPRC, PARP2, PRKDC, RUVBL2, TNKS1 and TNKS2. Binding often leads to interactor ubiquitination, in the presence of the appropriate E1 and E2 enzymes, and proteasomal degradation. Ubiquitinated; autoubiquitinated. Autoubiquitination is enhanced upon poly(ADP-ribose)-binding.

The protein resides in the cytoplasm. Its subcellular location is the cytosol. It is found in the nucleus. It carries out the reaction S-ubiquitinyl-[E2 ubiquitin-conjugating enzyme]-L-cysteine + [acceptor protein]-L-lysine = [E2 ubiquitin-conjugating enzyme]-L-cysteine + N(6)-ubiquitinyl-[acceptor protein]-L-lysine.. The protein operates within protein modification; protein ubiquitination. Functionally, E3 ubiquitin-protein ligase that specifically binds poly-ADP-ribosylated (PARsylated) proteins and mediates their ubiquitination and subsequent degradation. May regulate many important biological processes, such as cell survival and DNA damage response. Acts as an activator of the Wnt signaling pathway by mediating the ubiquitination of PARsylated AXIN1 and AXIN2, 2 key components of the beta-catenin destruction complex. Acts in cooperation with tankyrase proteins (TNKS and TNKS2), which mediate PARsylation of target proteins AXIN1, AXIN2, BLZF1, CASC3, TNKS and TNKS2. Recognizes and binds tankyrase-dependent PARsylated proteins via its WWE domain and mediates their ubiquitination, leading to their degradation. Different ubiquitin linkage types have been observed: TNKS2 undergoes ubiquitination at 'Lys-48' and 'Lys-63', while AXIN1 is only ubiquitinated at 'Lys-48'. May regulate TNKS and TNKS2 subcellular location, preventing aggregation at a centrosomal location. Neuroprotective protein. Protects the brain against N-methyl-D-aspartate (NMDA) receptor-mediated glutamate excitotoxicity and ischemia, by interfering with PAR-induced cell death, called parthanatos. Prevents nuclear translocation of AIFM1 in a PAR-binding dependent manner. Does not affect PARP1 activation. Protects against cell death induced by DNA damaging agents, such as N-methyl-N-nitro-N-nitrosoguanidine (MNNG) and rescues cells from G1 arrest. Promotes cell survival after gamma-irradiation. Facilitates DNA repair. The protein is E3 ubiquitin-protein ligase RNF146 (RNF146) of Macaca fascicularis (Crab-eating macaque).